Reading from the N-terminus, the 66-residue chain is Large ribosomal subunit protein uL29 (66 aa).

The protein belongs to the universal ribosomal protein uL29 family.

The protein is Large ribosomal subunit protein uL29 of Rhizobium rhizogenes (strain K84 / ATCC BAA-868) (Agrobacterium radiobacter).